Consider the following 394-residue polypeptide: 8-amino-7-oxononanoate synthase (394 aa).

R21 is a substrate binding site. A pyridoxal 5'-phosphate-binding site is contributed by G112 to Y113. Residue H137 participates in substrate binding. Pyridoxal 5'-phosphate contacts are provided by S183, H211, and T239. Position 242 is an N6-(pyridoxal phosphate)lysine (K242). T358 contributes to the substrate binding site.

This sequence belongs to the class-II pyridoxal-phosphate-dependent aminotransferase family. BioF subfamily. As to quaternary structure, homodimer. The cofactor is pyridoxal 5'-phosphate.

The enzyme catalyses 6-carboxyhexanoyl-[ACP] + L-alanine + H(+) = (8S)-8-amino-7-oxononanoate + holo-[ACP] + CO2. The protein operates within cofactor biosynthesis; biotin biosynthesis. Catalyzes the decarboxylative condensation of pimeloyl-[acyl-carrier protein] and L-alanine to produce 8-amino-7-oxononanoate (AON), [acyl-carrier protein], and carbon dioxide. The polypeptide is 8-amino-7-oxononanoate synthase (Burkholderia pseudomallei (strain 1710b)).